The sequence spans 434 residues: Maltotriose-binding protein (434 aa).

The first 20 residues, 1–20 (MRRATYAFALLAILVLGVVA), serve as a signal peptide directing secretion. The interval 28–52 (TTTPTQTSPATQPTTTQTPTQTETQ) is disordered. Residues 29-52 (TTPTQTSPATQPTTTQTPTQTETQ) show a composition bias toward low complexity.

It belongs to the bacterial solute-binding protein 1 family.

Functionally, involved in an abc transport system for maltotriose. Binds maltotriose much more tightly than maltose. This Pyrococcus furiosus (strain ATCC 43587 / DSM 3638 / JCM 8422 / Vc1) protein is Maltotriose-binding protein (malE).